Reading from the N-terminus, the 401-residue chain is Argininosuccinate synthase (401 aa).

ATP-binding positions include A9 to S17 and A36. L-citrulline contacts are provided by Y87 and S92. G117 contributes to the ATP binding site. Residues T119, N123, and D124 each coordinate L-aspartate. L-citrulline is bound at residue N123. L-citrulline contacts are provided by R127, S176, S185, E261, and Y273.

Belongs to the argininosuccinate synthase family. Type 1 subfamily. As to quaternary structure, homotetramer.

It is found in the cytoplasm. The enzyme catalyses L-citrulline + L-aspartate + ATP = 2-(N(omega)-L-arginino)succinate + AMP + diphosphate + H(+). Its pathway is amino-acid biosynthesis; L-arginine biosynthesis; L-arginine from L-ornithine and carbamoyl phosphate: step 2/3. The protein is Argininosuccinate synthase of Syntrophobacter fumaroxidans (strain DSM 10017 / MPOB).